A 106-amino-acid chain; its full sequence is Small ribosomal subunit protein uS17 (106 aa).

It belongs to the universal ribosomal protein uS17 family. As to quaternary structure, part of the 30S ribosomal subunit.

Its function is as follows. One of the primary rRNA binding proteins, it binds specifically to the 5'-end of 16S ribosomal RNA. The protein is Small ribosomal subunit protein uS17 of Methanosphaera stadtmanae (strain ATCC 43021 / DSM 3091 / JCM 11832 / MCB-3).